Reading from the N-terminus, the 149-residue chain is Nucleoside diphosphate kinase (149 aa).

ATP-binding residues include K9, F57, R85, T91, R102, and N112. H115 serves as the catalytic Pros-phosphohistidine intermediate.

It belongs to the NDK family. In terms of assembly, homotetramer. Mg(2+) serves as cofactor.

Its subcellular location is the cytoplasm. It catalyses the reaction a 2'-deoxyribonucleoside 5'-diphosphate + ATP = a 2'-deoxyribonucleoside 5'-triphosphate + ADP. The enzyme catalyses a ribonucleoside 5'-diphosphate + ATP = a ribonucleoside 5'-triphosphate + ADP. Major role in the synthesis of nucleoside triphosphates other than ATP. The ATP gamma phosphate is transferred to the NDP beta phosphate via a ping-pong mechanism, using a phosphorylated active-site intermediate. This is Nucleoside diphosphate kinase from Staphylococcus saprophyticus subsp. saprophyticus (strain ATCC 15305 / DSM 20229 / NCIMB 8711 / NCTC 7292 / S-41).